Reading from the N-terminus, the 193-residue chain is Acyl carrier protein phosphodiesterase (193 aa).

The protein belongs to the AcpH family.

It carries out the reaction holo-[ACP] + H2O = apo-[ACP] + (R)-4'-phosphopantetheine + H(+). Its function is as follows. Converts holo-ACP to apo-ACP by hydrolytic cleavage of the phosphopantetheine prosthetic group from ACP. The sequence is that of Acyl carrier protein phosphodiesterase from Pectobacterium atrosepticum (strain SCRI 1043 / ATCC BAA-672) (Erwinia carotovora subsp. atroseptica).